A 539-amino-acid chain; its full sequence is Glutamate/serine transporter AimA (539 aa).

A run of 13 helical transmembrane segments spans residues 11–31, 36–56, 82–102, 137–157, 164–184, 199–219, 238–258, 283–303, 350–370, 401–421, 424–444, 457–477, and 486–506; these read FSLM…FGAW, IAGP…LFIA, SFIG…VIPV, AFAS…VNLF, ITIF…FVGF, GWAS…FNGF, IAVV…QIAF, LAIA…AFVS, LIVS…AEII, LKGL…VLYW, WPLT…YFYY, FKAG…SYLG, and VIHY…FYVW.

The protein belongs to the amino acid-polyamine-organocation (APC) superfamily. AGT (TC 2.A.3.11) family.

Its subcellular location is the cell membrane. Its function is as follows. Major glutamate and serine transporter. Cannot transport threonine. AimA is the major glutamate transporter under standard growth conditions when glutamate is not limiting in the medium. The chain is Glutamate/serine transporter AimA from Bacillus subtilis (strain 168).